A 901-amino-acid polypeptide reads, in one-letter code: Clathrin coat assembly protein AP180 (901 aa).

One can recognise an ENTH domain in the interval 14–145; sequence QYSVTGSAVA…FSYRQMAFDF (132 aa). Disordered regions lie at residues 285-326, 397-424, 497-522, and 573-606; these read LEGK…DTSP, PISDPFAPEPSPPTTTTEPASASASTTT, PETSAPVVTPTASTAPPVPATAPSPA, and AAAPKPDAAPSIDLFGTDAFSSPPRGASPVPESS. Residues S296, S300, and S306 each carry the phosphoserine modification. Residues 302–324 are compositionally biased toward polar residues; that stretch reads LSKSSPATTVTSPNSTPAKTIDT. The O-linked (GlcNAc) threonine glycan is linked to T310. Residue S313 is modified to Phosphoserine. Residue T317 is modified to Phosphothreonine. Low complexity-rich tracts occupy residues 410–424 and 500–511; these read TTTTEPASASASTTT and SAPVVTPTASTA. Positions 512–522 are enriched in pro residues; that stretch reads PPVPATAPSPA. Phosphoserine occurs at positions 594, 600, 621, 627, and 761. Disordered stretches follow at residues 803-845 and 857-901; these read SAGV…GMTM and MMRP…KDFL. A compositionally biased stretch (low complexity) spans 835–845; that stretch reads GMPPSGTGMTM. Position 859 is an asymmetric dimethylarginine; alternate (R859). Omega-N-methylarginine; alternate is present on R859. The segment covering 870–882 has biased composition (polar residues); sequence TQLSPSPTPATQS. The span at 887–901 shows a compositional bias: basic and acidic residues; the sequence is PAKDPLADLNIKDFL.

It belongs to the PICALM/SNAP91 family. In terms of assembly, binds AP2A2. Interacts with AP2B1; clathrin competes with SNAP91. Post-translationally, thr-310 can be modified by the addition of N-acetylglucosamine which can be further phosphorylated. There is no evidence for direct Thr-310 phosphorylation. Brain. Associated with the synapses.

It localises to the cell membrane. The protein resides in the membrane. The protein localises to the coated pit. In terms of biological role, adaptins are components of the adaptor complexes which link clathrin to receptors in coated vesicles. Clathrin-associated protein complexes are believed to interact with the cytoplasmic tails of membrane proteins, leading to their selection and concentration. Binding of AP180 to clathrin triskelia induces their assembly into 60-70 nm coats. The polypeptide is Clathrin coat assembly protein AP180 (Snap91) (Mus musculus (Mouse)).